Here is a 360-residue protein sequence, read N- to C-terminus: Arginase, non-hepatic 3 (360 aa).

The Mn(2+) site is built by H122, D145, H147, and D149. Substrate-binding positions include 147 to 151 (HADIN), 158 to 160 (SGN), and D204. Mn(2+)-binding residues include D253 and D255. Substrate-binding residues include T267 and E298.

It belongs to the arginase family. In terms of assembly, homotrimer. It depends on Mn(2+) as a cofactor. As to expression, expressed at differing tadpole stages in tail, intestine, hindlimb and trunk region. Strongest in tadpole tail.

The enzyme catalyses L-arginine + H2O = urea + L-ornithine. It functions in the pathway nitrogen metabolism; urea cycle; L-ornithine and urea from L-arginine: step 1/1. As well as its role in the urea cycle, may be involved in tissue remodeling. The protein is Arginase, non-hepatic 3 (arg2-c) of Xenopus laevis (African clawed frog).